A 383-amino-acid chain; its full sequence is GDSL esterase/lipase At1g28610 (383 aa).

The N-terminal stretch at Met-1–Ser-22 is a signal peptide. Ser-38 serves as the catalytic Nucleophile. Residues Asn-134, Asn-184, and Asn-315 are each glycosylated (N-linked (GlcNAc...) asparagine). Catalysis depends on residues Asp-340 and His-343.

Belongs to the 'GDSL' lipolytic enzyme family.

It localises to the secreted. The chain is GDSL esterase/lipase At1g28610 from Arabidopsis thaliana (Mouse-ear cress).